Consider the following 569-residue polypeptide: Urease subunit alpha (569 aa).

In terms of domain architecture, Urease spans 131–569 (GGFDAHIHFI…LPLAQRYFMY (439 aa)). Ni(2+) is bound by residues His-136, His-138, and Lys-219. Lys-219 is modified (N6-carboxylysine). His-221 contacts substrate. Positions 248 and 274 each coordinate Ni(2+). His-322 serves as the catalytic Proton donor. Ni(2+) is bound at residue Asp-362.

It belongs to the metallo-dependent hydrolases superfamily. Urease alpha subunit family. Heterotrimer of UreA (gamma), UreB (beta) and UreC (alpha) subunits. Three heterotrimers associate to form the active enzyme. Requires Ni cation as cofactor. Post-translationally, carboxylation allows a single lysine to coordinate two nickel ions.

It localises to the cytoplasm. The enzyme catalyses urea + 2 H2O + H(+) = hydrogencarbonate + 2 NH4(+). It functions in the pathway nitrogen metabolism; urea degradation; CO(2) and NH(3) from urea (urease route): step 1/1. In Jannaschia sp. (strain CCS1), this protein is Urease subunit alpha.